A 405-amino-acid chain; its full sequence is Arginine biosynthesis bifunctional protein ArgJ (405 aa).

Residues threonine 152, lysine 178, threonine 189, glutamate 276, asparagine 400, and threonine 405 each contribute to the substrate site. Threonine 189 serves as the catalytic Nucleophile.

This sequence belongs to the ArgJ family. As to quaternary structure, heterotetramer of two alpha and two beta chains.

It is found in the cytoplasm. It carries out the reaction N(2)-acetyl-L-ornithine + L-glutamate = N-acetyl-L-glutamate + L-ornithine. The catalysed reaction is L-glutamate + acetyl-CoA = N-acetyl-L-glutamate + CoA + H(+). It functions in the pathway amino-acid biosynthesis; L-arginine biosynthesis; L-ornithine and N-acetyl-L-glutamate from L-glutamate and N(2)-acetyl-L-ornithine (cyclic): step 1/1. Its pathway is amino-acid biosynthesis; L-arginine biosynthesis; N(2)-acetyl-L-ornithine from L-glutamate: step 1/4. Functionally, catalyzes two activities which are involved in the cyclic version of arginine biosynthesis: the synthesis of N-acetylglutamate from glutamate and acetyl-CoA as the acetyl donor, and of ornithine by transacetylation between N(2)-acetylornithine and glutamate. The sequence is that of Arginine biosynthesis bifunctional protein ArgJ from Pseudomonas syringae pv. tomato (strain ATCC BAA-871 / DC3000).